Reading from the N-terminus, the 245-residue chain is 1-(5-phosphoribosyl)-5-[(5-phosphoribosylamino)methylideneamino] imidazole-4-carboxamide isomerase (245 aa).

Asp7 serves as the catalytic Proton acceptor. Catalysis depends on Asp129, which acts as the Proton donor.

Belongs to the HisA/HisF family.

Its subcellular location is the cytoplasm. The catalysed reaction is 1-(5-phospho-beta-D-ribosyl)-5-[(5-phospho-beta-D-ribosylamino)methylideneamino]imidazole-4-carboxamide = 5-[(5-phospho-1-deoxy-D-ribulos-1-ylimino)methylamino]-1-(5-phospho-beta-D-ribosyl)imidazole-4-carboxamide. Its pathway is amino-acid biosynthesis; L-histidine biosynthesis; L-histidine from 5-phospho-alpha-D-ribose 1-diphosphate: step 4/9. In Alteromonas mediterranea (strain DSM 17117 / CIP 110805 / LMG 28347 / Deep ecotype), this protein is 1-(5-phosphoribosyl)-5-[(5-phosphoribosylamino)methylideneamino] imidazole-4-carboxamide isomerase.